A 179-amino-acid polypeptide reads, in one-letter code: Endoribonuclease YbeY (179 aa).

Zn(2+)-binding residues include His148, His152, and His158.

Belongs to the endoribonuclease YbeY family. Zn(2+) is required as a cofactor.

Its subcellular location is the cytoplasm. In terms of biological role, single strand-specific metallo-endoribonuclease involved in late-stage 70S ribosome quality control and in maturation of the 3' terminus of the 16S rRNA. The protein is Endoribonuclease YbeY of Prochlorococcus marinus (strain MIT 9215).